A 432-amino-acid polypeptide reads, in one-letter code: D-amino acid dehydrogenase 1 (432 aa).

Position 3 to 17 (3 to 17 (VLILGSGVVGTVSAY)) interacts with FAD.

This sequence belongs to the DadA oxidoreductase family. The cofactor is FAD.

The enzyme catalyses a D-alpha-amino acid + A + H2O = a 2-oxocarboxylate + AH2 + NH4(+). Functionally, oxidative deamination of D-amino acids. The chain is D-amino acid dehydrogenase 1 (dadA1) from Pseudomonas putida (strain ATCC 47054 / DSM 6125 / CFBP 8728 / NCIMB 11950 / KT2440).